Consider the following 140-residue polypeptide: Large ribosomal subunit protein uL11 (140 aa).

The protein belongs to the universal ribosomal protein uL11 family. Part of the ribosomal stalk of the 50S ribosomal subunit. Interacts with L10 and the large rRNA to form the base of the stalk. L10 forms an elongated spine to which L12 dimers bind in a sequential fashion forming a multimeric L10(L12)X complex. In terms of processing, one or more lysine residues are methylated.

Functionally, forms part of the ribosomal stalk which helps the ribosome interact with GTP-bound translation factors. The polypeptide is Large ribosomal subunit protein uL11 (Dehalococcoides mccartyi (strain ATCC BAA-2266 / KCTC 15142 / 195) (Dehalococcoides ethenogenes (strain 195))).